Here is a 558-residue protein sequence, read N- to C-terminus: Oligo-1,6-glucosidase (558 aa).

Ca(2+) contacts are provided by Asp21, Asn23, Asp25, and Asp29. The Nucleophile role is filled by Asp199. The active-site Proton donor is Glu255.

Belongs to the glycosyl hydrolase 13 family.

The protein localises to the cytoplasm. The catalysed reaction is Hydrolysis of (1-&gt;6)-alpha-D-glucosidic linkages in some oligosaccharides produced from starch and glycogen by alpha-amylase, and in isomaltose.. The protein is Oligo-1,6-glucosidase (malL) of Bacillus cereus.